A 209-amino-acid chain; its full sequence is Leukemia-associated protein 7 homolog (209 aa).

The segment at 28-87 is disordered; it reads WGWGDGPSAPGSPRGPDHVPIAQARRPGQLRTRRGLGRGSIGARGSPEAGGLRGAEGGAE.

This is Leukemia-associated protein 7 homolog (Dleu7) from Mus musculus (Mouse).